Reading from the N-terminus, the 397-residue chain is Phosphoglycerate kinase (397 aa).

Substrate-binding positions include 21-23 (DFN), Arg36, 59-62 (HCGR), Arg118, and Arg151. Residues Lys201, Glu323, and 353–356 (GGDT) contribute to the ATP site.

Belongs to the phosphoglycerate kinase family. Monomer.

It is found in the cytoplasm. It carries out the reaction (2R)-3-phosphoglycerate + ATP = (2R)-3-phospho-glyceroyl phosphate + ADP. It functions in the pathway carbohydrate degradation; glycolysis; pyruvate from D-glyceraldehyde 3-phosphate: step 2/5. This is Phosphoglycerate kinase from Bartonella henselae (strain ATCC 49882 / DSM 28221 / CCUG 30454 / Houston 1) (Rochalimaea henselae).